A 187-amino-acid chain; its full sequence is DNA-3-methyladenine glycosylase 1 (187 aa).

The Zn(2+) site is built by C4, H17, H175, and C179.

The catalysed reaction is Hydrolysis of alkylated DNA, releasing 3-methyladenine.. Activity is controlled by product inhibition. Hydrolysis of the deoxyribose N-glycosidic bond to excise 3-methyladenine from the damaged DNA polymer formed by alkylation lesions. The polypeptide is DNA-3-methyladenine glycosylase 1 (Escherichia coli (strain K12)).